A 152-amino-acid polypeptide reads, in one-letter code: Nucleoside diphosphate kinase (152 aa).

ATP contacts are provided by lysine 9, phenylalanine 57, arginine 85, threonine 91, arginine 102, and asparagine 112. Histidine 115 (pros-phosphohistidine intermediate) is an active-site residue.

The protein belongs to the NDK family. In terms of assembly, homotetramer. It depends on Mg(2+) as a cofactor.

The protein resides in the cytoplasm. The enzyme catalyses a 2'-deoxyribonucleoside 5'-diphosphate + ATP = a 2'-deoxyribonucleoside 5'-triphosphate + ADP. It carries out the reaction a ribonucleoside 5'-diphosphate + ATP = a ribonucleoside 5'-triphosphate + ADP. Its function is as follows. Major role in the synthesis of nucleoside triphosphates other than ATP. The ATP gamma phosphate is transferred to the NDP beta phosphate via a ping-pong mechanism, using a phosphorylated active-site intermediate. This Rhodopirellula baltica (strain DSM 10527 / NCIMB 13988 / SH1) protein is Nucleoside diphosphate kinase.